The following is a 354-amino-acid chain: Guanine nucleotide-binding protein G(o) subunit alpha (354 aa).

A lipid anchor (N-myristoyl glycine) is attached at G2. Residue C3 is the site of S-palmitoyl cysteine attachment. Residues 32 to 354 (KDIKLLLLGA…ANNLRGCGLY (323 aa)) form the G-alpha domain. The segment at 35-48 (KLLLLGAGESGKST) is G1 motif. GTP is bound by residues 40–47 (GAGESGKS), 176–182 (LRTRVKT), 201–205 (DVGGQ), 270–273 (NKKD), and A326. The Mg(2+) site is built by S47 and T182. A G2 motif region spans residues 174–182 (DILRTRVKT). The tract at residues 197–206 (FKLFDVGGQR) is G3 motif. The segment at 266–273 (ILFLNKKD) is G4 motif. A G5 motif region spans residues 324 to 329 (TCATDT).

This sequence belongs to the G-alpha family. G(i/o/t/z) subfamily. G proteins are composed of 3 units; alpha, beta and gamma. The alpha chain contains the guanine nucleotide binding site.

Its function is as follows. Guanine nucleotide-binding proteins (G proteins) are involved as modulators or transducers in various transmembrane signaling systems. The G(o) protein function is not clear. This is Guanine nucleotide-binding protein G(o) subunit alpha from Locusta migratoria (Migratory locust).